The chain runs to 165 residues: NADPH-dependent 7-cyano-7-deazaguanine reductase (165 aa).

Cys56 acts as the Thioimide intermediate in catalysis. The Proton donor role is filled by Asp63. Residues 78–80 (VES) and 97–98 (HE) contribute to the substrate site.

The protein belongs to the GTP cyclohydrolase I family. QueF type 1 subfamily.

The protein resides in the cytoplasm. The catalysed reaction is 7-aminomethyl-7-carbaguanine + 2 NADP(+) = 7-cyano-7-deazaguanine + 2 NADPH + 3 H(+). The protein operates within tRNA modification; tRNA-queuosine biosynthesis. Its function is as follows. Catalyzes the NADPH-dependent reduction of 7-cyano-7-deazaguanine (preQ0) to 7-aminomethyl-7-deazaguanine (preQ1). The polypeptide is NADPH-dependent 7-cyano-7-deazaguanine reductase (Bacillus licheniformis (strain ATCC 14580 / DSM 13 / JCM 2505 / CCUG 7422 / NBRC 12200 / NCIMB 9375 / NCTC 10341 / NRRL NRS-1264 / Gibson 46)).